A 524-amino-acid polypeptide reads, in one-letter code: Importin subunit alpha-1 (524 aa).

Residues 1 to 42 (MGDEFRPSHEERSKMYKSNVRDQNEMRRKRREDEVQIRKNRR) form a disordered region. Residues 1-59 (MGDEFRPSHEERSKMYKSNVRDQNEMRRKRREDEVQIRKNRRDEKFERNRQITVQRSLS) enclose the IBB domain.

This sequence belongs to the importin alpha family. Forms a complex with an importin beta subunit. Adult germline tissues.

The protein localises to the cytoplasm. In terms of biological role, binds specifically and directly to substrates containing either a simple or bipartite NLS motif. Promotes docking of import substrates to the nuclear envelope. Seems to act as a cytosolic receptor for both simple and bipartite NLS motifs. This is Importin subunit alpha-1 (ima-1) from Caenorhabditis elegans.